The following is a 257-amino-acid chain: Snake venom serine protease nikobin (257 aa).

Residues 1-18 (MVLIRVLANLLLLQLSYA) form the signal peptide. The propeptide occupies 19-24 (QKSSEL). In terms of domain architecture, Peptidase S1 spans 25-248 (VIGGDECNIN…YSDWIQSIIA (224 aa)). 6 disulfides stabilise this stretch: Cys31–Cys162, Cys49–Cys65, Cys97–Cys255, Cys141–Cys209, Cys173–Cys188, and Cys199–Cys224. Active-site charge relay system residues include His64 and Asp109. Residues Asn120 and Asn121 are each glycosylated (N-linked (GlcNAc...) asparagine). Residue Ser203 is the Charge relay system of the active site. N-linked (GlcNAc...) asparagine glycosylation occurs at Asn250.

The protein belongs to the peptidase S1 family. Snake venom subfamily. As to quaternary structure, monomer. In terms of tissue distribution, expressed by the venom gland.

Its subcellular location is the secreted. Its function is as follows. Snake venom serine protease that may act in the hemostasis system of the prey. The protein is Snake venom serine protease nikobin (sp-VN) of Vipera nikolskii (Nikolsky's adder).